The chain runs to 234 residues: CD-NTase-associated protein 13 (234 aa).

Residues 20–42 traverse the membrane as a helical segment; the sequence is TIMKNVIANVSTAITLALMILWI.

The protein in the C-terminal section; belongs to the bacterial STING family.

It is found in the cell inner membrane. Functionally, effector protein of a CBASS antivirus system. CBASS (cyclic oligonucleotide-based antiphage signaling system) provides immunity against bacteriophage. The CD-NTase protein synthesizes cyclic nucleotides in response to infection; these serve as specific second messenger signals. The signals activate a diverse range of effectors, leading to bacterial cell death and thus abortive phage infection. A type I-D CBASS(GG) system. Its function is as follows. Binds c-di-GMP (synthesized by the cognate CdnE encoded upstream in the same operon) and about 10-fold less well 3'3'-cGAMP, but not c-di-AMP, 2'3'-cGAMP or cUMP-AMP (tested with a protein without the transmembrane region). The effector protein for this CBASS system, its activity is stimulated by c-di-GMP and leads to cell death. This is CD-NTase-associated protein 13 from Roseivirga ehrenbergii (strain DSM 102268 / JCM 13514 / KCTC 12282 / NCIMB 14502 / KMM 6017).